The sequence spans 484 residues: Zinc metalloproteinase-disintegrin jerdonitin (484 aa).

Positions M1–S20 are cleaved as a signal peptide. A propeptide spanning residues I21–E191 is cleaved from the precursor. Q192 is modified (pyrrolidone carboxylic acid). One can recognise a Peptidase M12B domain in the interval R194 to P392. 2 residues coordinate Ca(2+): E197 and D281. 3 disulfide bridges follow: C305-C387, C345-C369, and C347-C352. A Zn(2+)-binding site is contributed by H330. Residue E331 is part of the active site. Residues H334 and H340 each contribute to the Zn(2+) site. C387, N390, V402, N405, E409, E412, and D415 together coordinate Ca(2+). The region spanning P400–A484 is the Disintegrin domain. 7 disulfide bridges follow: C403-C422, C414-C432, C416-C427, C426-C449, C440-C446, C445-C470, and C458-C477. The short motif at R462–D464 is the Cell attachment site element.

This sequence belongs to the venom metalloproteinase (M12B) family. P-II subfamily. P-IIb sub-subfamily. Monomer. Requires Zn(2+) as cofactor. In terms of processing, the N-terminus is blocked. As to expression, expressed by the venom gland.

It localises to the secreted. Fibrinogenolytic activity is completely inhibited by EDTA, but not by PMSF. Snake venom zinc metalloproteinase that inhibits ADP-induced human platelet aggregation (IC(50)=120 nM (native) and IC(50)=248 nM (recombinant)). May act by binding to the receptor GPIIb/GPIIIa (ITGA2B/ITGB3) on the platelet surface. Degrades the alpha-chain of fibrinogen completely and the beta-chain partially, leaving the gamma chain intact. Also inhibits the growth of several cell lines, including human liver cancer cells (Bel7402), human leukemia cells (K562) and human gastric carcinoma cells (BGC823). In Protobothrops jerdonii (Jerdon's pitviper), this protein is Zinc metalloproteinase-disintegrin jerdonitin.